A 340-amino-acid polypeptide reads, in one-letter code: NADH-quinone oxidoreductase subunit H (340 aa).

A run of 9 helical transmembrane segments spans residues 9–29, 81–101, 113–133, 158–178, 184–204, 221–240, 245–264, 273–293, and 316–336; these read IWII…VAFI, LIAP…IPFA, LLFL…AGWA, GFAL…GIVL, LWHW…ITAV, IVAG…FFLA, MVLV…LSPF, LFAW…FIFT, and VLIP…EFHW.

It belongs to the complex I subunit 1 family. In terms of assembly, NDH-1 is composed of 14 different subunits. Subunits NuoA, H, J, K, L, M, N constitute the membrane sector of the complex.

Its subcellular location is the cell inner membrane. The catalysed reaction is a quinone + NADH + 5 H(+)(in) = a quinol + NAD(+) + 4 H(+)(out). Its function is as follows. NDH-1 shuttles electrons from NADH, via FMN and iron-sulfur (Fe-S) centers, to quinones in the respiratory chain. The immediate electron acceptor for the enzyme in this species is believed to be ubiquinone. Couples the redox reaction to proton translocation (for every two electrons transferred, four hydrogen ions are translocated across the cytoplasmic membrane), and thus conserves the redox energy in a proton gradient. This subunit may bind ubiquinone. In Coxiella burnetii (strain CbuK_Q154) (Coxiella burnetii (strain Q154)), this protein is NADH-quinone oxidoreductase subunit H.